The following is a 463-amino-acid chain: Gamma-aminobutyric acid receptor subunit alpha-5 (463 aa).

An N-terminal signal peptide occupies residues 1–25 (MDNGMLSRFIMTQTLLVFCISMTLS). Topologically, residues 26–260 (SHFGFSQMPT…FHLKRKIGYF (235 aa)) are extracellular. A glycan (N-linked (GlcNAc...) asparagine) is linked at Asn-45. Arg-101 serves as a coordination point for 4-aminobutanoate. The N-linked (GlcNAc...) asparagine glycan is linked to Asn-145. Thr-164 is a 4-aminobutanoate binding site. A disulfide bridge links Cys-173 with Cys-187. 2 N-linked (GlcNAc...) asparagine glycosylation sites follow: Asn-207 and Asn-236. The next 3 membrane-spanning stretches (helical) occupy residues 261–281 (VIQT…SFWL), 287–308 (PART…ISAR), and 319–340 (AMDW…EFAT). At 341 to 428 (VNYFTKRGWA…TYNSISKIDK (88 aa)) the chain is on the cytoplasmic side. Lys-355 participates in a covalent cross-link: Glycyl lysine isopeptide (Lys-Gly) (interchain with G-Cter in ubiquitin). The disordered stretch occupies residues 387 to 408 (PNIPKEQPPAGTANAPTVSIKA). The helical transmembrane segment at 429-449 (MSRIVFPILFGTFNLVYWATY) threads the bilayer.

Belongs to the ligand-gated ion channel (TC 1.A.9) family. Gamma-aminobutyric acid receptor (TC 1.A.9.5) subfamily. GABRA5 sub-subfamily. In terms of assembly, heteropentamer, formed by a combination of alpha (GABRA1-6), beta (GABRB1-3), gamma (GABRG1-3), delta (GABRD), epsilon (GABRE), rho (GABRR1-3), pi (GABRP) and theta (GABRQ) chains, each subunit exhibiting distinct physiological and pharmacological properties. Expressed in brain, in hippocampal pyramidal neurons.

The protein localises to the postsynaptic cell membrane. Its subcellular location is the cell membrane. It catalyses the reaction chloride(in) = chloride(out). Functionally, alpha subunit of the heteropentameric ligand-gated chloride channel gated by gamma-aminobutyric acid (GABA), a major inhibitory neurotransmitter in the brain. GABA-gated chloride channels, also named GABA(A) receptors (GABAAR), consist of five subunits arranged around a central pore and contain GABA active binding site(s) located at the alpha and beta subunit interface(s). When activated by GABA, GABAARs selectively allow the flow of chloride anions across the cell membrane down their electrochemical gradient. GABAARs containing alpha-5/GABRA5 are mainly extrasynaptic and contribute to the tonic GABAergic inhibition of the hippocampus. Extrasynaptic alpha-5-containing GABAARs in CA1 pyramidal neurons play a role in learning and memory processes. The chain is Gamma-aminobutyric acid receptor subunit alpha-5 from Mus musculus (Mouse).